The sequence spans 371 residues: Terpene cyclase 6 (371 aa).

Aspartate 144, asparagine 266, serine 270, and glutamate 274 together coordinate Mg(2+). The D(D/E)XX(D/E) motif motif lies at 144 to 148; that stretch reads DDVME. The NSE motif motif lies at 266 to 274; it reads NDLYSYDKE. Positions 352–359 match the WxxxxxRY motif motif; the sequence is HHATLGRY. 2 residues coordinate (2E,6E)-farnesyl diphosphate: arginine 358 and tyrosine 359.

The protein belongs to the terpene synthase family. As to quaternary structure, homodimer. The cofactor is Mg(2+).

The catalysed reaction is (2E,6E)-farnesyl diphosphate + H2O = (-)-alpha-acorenol + diphosphate. Its pathway is sesquiterpene biosynthesis. Its function is as follows. Terpene cyclase that catalyzes the cyclization of farnesyl diphosphate (FPP) to the spirocyclic sesquiterpene alpha-acorenol. The sequence is that of Terpene cyclase 6 from Gibberella fujikuroi (strain CBS 195.34 / IMI 58289 / NRRL A-6831) (Bakanae and foot rot disease fungus).